The sequence spans 1028 residues: Sporulation-specific protein 3 (1028 aa).

The protein resides in the prospore membrane. Functionally, has a role in spore morphogenesis. Involved in the assembly of the forespore membrane. This chain is Sporulation-specific protein 3 (spo3), found in Schizosaccharomyces pombe (strain 972 / ATCC 24843) (Fission yeast).